A 476-amino-acid polypeptide reads, in one-letter code: Probable serine carboxypeptidase CPVL (476 aa).

The first 22 residues, 1 to 22 (MVGAMWKVIVSLVLLMPGPCDG), serve as a signal peptide directing secretion. N-linked (GlcNAc...) asparagine glycans are attached at residues asparagine 81 and asparagine 132. Serine 204 is a catalytic residue. 2 N-linked (GlcNAc...) asparagine glycosylation sites follow: asparagine 307 and asparagine 346. Residues aspartate 388 and histidine 448 contribute to the active site.

Belongs to the peptidase S10 family. Expressed in macrophages but not in other leukocytes. Abundantly expressed in heart and kidney. Also expressed in spleen, leukocytes, and placenta.

Its function is as follows. May be involved in the digestion of phagocytosed particles in the lysosome, participation in an inflammatory protease cascade, and trimming of peptides for antigen presentation. This chain is Probable serine carboxypeptidase CPVL (CPVL), found in Homo sapiens (Human).